The sequence spans 291 residues: Transmembrane O-methyltransferase (291 aa).

A helical membrane pass occupies residues Val31–Val51. S-adenosyl-L-methionine contacts are provided by residues Glu137, Gly139–Thr140, Ser145, Glu163, and Ser193.

The protein belongs to the class I-like SAM-binding methyltransferase superfamily. Cation-dependent O-methyltransferase family. Interacts with LHFPL5, PCDH15, TMC1, TMC2 and TMIE. Interacts directly with TMC1. The interaction of TOMT with TMC1 and TMC2 is required for the transportation of TMC1/2 into the stereocilia of hair cells.

Its subcellular location is the membrane. The protein resides in the cytoplasm. It localises to the endoplasmic reticulum. The enzyme catalyses a catechol + S-adenosyl-L-methionine = a guaiacol + S-adenosyl-L-homocysteine + H(+). Functionally, catalyzes the O-methylation, and thereby the inactivation, of catecholamine neurotransmitters and catechol hormones. Required for auditory function. Component of the cochlear hair cell's mechanotransduction (MET) machinery. Involved in the assembly of the asymmetric tip-link MET complex. Required for transportation of TMC1 and TMC2 proteins into the mechanically sensitive stereocilia of the hair cells. The function in MET is independent of the enzymatic activity. The protein is Transmembrane O-methyltransferase of Pan troglodytes (Chimpanzee).